The sequence spans 500 residues: Putative antiporter subunit mnhD2 (500 aa).

The next 14 membrane-spanning stretches (helical) occupy residues 2-22 (MSNL…ILVF), 32-52 (ILSI…LIYV), 78-98 (LSLL…AYGF), 108-128 (FHLP…FLTS), 130-150 (LFNL…LVTL), 161-181 (IVYV…IGML), 209-229 (ISLV…FMWL), 240-260 (LAAL…IRFF), 273-293 (TLLV…VIAY), 308-328 (IGFI…GAIF), 330-350 (LAND…LVYM), 368-388 (FFGV…PFSG), 403-423 (GNYI…YSLF), and 450-470 (GLLS…PVVL).

It belongs to the CPA3 antiporters (TC 2.A.63) subunit D family. May form a heterooligomeric complex that consists of seven subunits: mnhA2, mnhB2, mnhC2, mnhD2, mnhE2, mnhF2 and mnhG2.

It is found in the cell membrane. This Staphylococcus epidermidis (strain ATCC 12228 / FDA PCI 1200) protein is Putative antiporter subunit mnhD2 (mnhD2).